The primary structure comprises 530 residues: Chaperone Ric-8A (530 aa).

Ser435 bears the Phosphoserine mark. Thr440 and Thr442 each carry phosphothreonine. Ser501, Ser522, Ser523, and Ser527 each carry phosphoserine.

This sequence belongs to the synembryn family. In terms of assembly, interacts with GDP-bound G alpha proteins GNAI1, GNAO1 and GNAQ, and with GNA13 with lower affinity. Does not interact with G-alpha proteins when they are in complex with subunits beta and gamma. Interacts (via C-terminus) with RGS14; the interaction stimulates the dissociation of the complex between RGS14 and the active GTP-bound form of GNAI1. Interacts with NCS1; interaction is favored in the absence of Ca(2+) and myristoylation of NCS1 is not required. Expressed in neurons and neurites of the CA1 and CA2 subregions of the hippocampus (at protein level). In adult brain, it is expressed in the neocortex, hippocampus and cerebellum as well as in the pineal gland and ependymal layer.

Its subcellular location is the cytoplasm. It is found in the cell cortex. Chaperone that specifically binds and folds nascent G alpha proteins prior to G protein heterotrimer formation, promoting their stability and activity: folds GNAI1, GNAO1, GNA13 and GNAQ. Does not fold G(s) G-alpha proteins GNAS nor GNAL. Also acts as a guanine nucleotide exchange factor (GEF) for G alpha proteins by stimulating exchange of bound GDP for free GTP. Involved in regulation of microtubule pulling forces during mitotic movement of chromosomes by stimulating G(i)-alpha protein (GNAI1), possibly leading to release G(i)-alpha-GTP and NuMA proteins from the NuMA-GPSM2-G(i)-alpha-GDP complex. Also acts as an activator for G(q)-alpha (GNAQ) protein by enhancing the G(q)-coupled receptor-mediated ERK activation. This chain is Chaperone Ric-8A, found in Mus musculus (Mouse).